A 334-amino-acid chain; its full sequence is Rhomboid-like protein 14, mitochondrial (334 aa).

The transit peptide at 1–87 (MENFGEGRRS…RLFLSAFYHV (87 aa)) directs the protein to the mitochondrion. 4 consecutive transmembrane segments (helical) span residues 114–134 (EFAS…LLLA), 146–166 (AYYN…KVVL), 176–196 (VYGI…LVQM), and 197–217 (FVPN…IIYL). The active-site Nucleophile is S156. H206 functions as the Charge relay system in the catalytic mechanism. The segment at 273–302 (GPGIWRCQSCTYDNSGWLSACEMCGSGRAR) adopts a RanBP2-type zinc-finger fold.

This sequence belongs to the peptidase S54 family.

The protein resides in the mitochondrion membrane. Functionally, probable rhomboid-type serine protease that catalyzes intramembrane proteolysis. May function in the heat-shock response pathway. In Arabidopsis thaliana (Mouse-ear cress), this protein is Rhomboid-like protein 14, mitochondrial.